Here is a 360-residue protein sequence, read N- to C-terminus: Chorismate synthase (360 aa).

Arg-48 is an NADP(+) binding site. FMN-binding positions include 125–127 (RSS), 242–243 (NA), Gly-286, 301–305 (KPTSS), and Arg-327.

Belongs to the chorismate synthase family. As to quaternary structure, homotetramer. FMNH2 serves as cofactor.

The catalysed reaction is 5-O-(1-carboxyvinyl)-3-phosphoshikimate = chorismate + phosphate. The protein operates within metabolic intermediate biosynthesis; chorismate biosynthesis; chorismate from D-erythrose 4-phosphate and phosphoenolpyruvate: step 7/7. Catalyzes the anti-1,4-elimination of the C-3 phosphate and the C-6 proR hydrogen from 5-enolpyruvylshikimate-3-phosphate (EPSP) to yield chorismate, which is the branch point compound that serves as the starting substrate for the three terminal pathways of aromatic amino acid biosynthesis. This reaction introduces a second double bond into the aromatic ring system. This Pelagibacter ubique (strain HTCC1062) protein is Chorismate synthase.